Here is a 141-residue protein sequence, read N- to C-terminus: MSDEAYAAFLETANKPVPSYSGDSSQLPSKWLRSSKNMLEDPSFKTLAGKVKDEYFVSESDEKFHPICIDNIPDEFEEIDAKTFDPHQKYKKVIHAIEQSSGSKDIHYFSYEESSTKTVYYVLAHLNDNKWFGVATVGIYT.

This is an uncharacterized protein from Schizosaccharomyces pombe (strain 972 / ATCC 24843) (Fission yeast).